Here is a 226-residue protein sequence, read N- to C-terminus: Ribonuclease 3 (226 aa).

In terms of domain architecture, RNase III spans K7 to G134. E47 contacts Mg(2+). The active site involves D51. Residues D120 and E123 each coordinate Mg(2+). The active site involves E123. The 67-residue stretch at D160–K226 folds into the DRBM domain. A disordered region spans residues K201–K226. Positions E214–K226 are enriched in low complexity.

The protein belongs to the ribonuclease III family. Homodimer. The cofactor is Mg(2+).

The protein localises to the cytoplasm. The enzyme catalyses Endonucleolytic cleavage to 5'-phosphomonoester.. Digests double-stranded RNA. Involved in the processing of primary rRNA transcript to yield the immediate precursors to the large and small rRNAs (23S and 16S). Processes some mRNAs, and tRNAs when they are encoded in the rRNA operon. Processes pre-crRNA and tracrRNA of type II CRISPR loci if present in the organism. The sequence is that of Ribonuclease 3 from Lactobacillus johnsonii (strain CNCM I-12250 / La1 / NCC 533).